Reading from the N-terminus, the 684-residue chain is NAD(P)H-quinone oxidoreductase subunit 5, chloroplastic (684 aa).

14 helical membrane-spanning segments follow: residues 16–36 (WAFP…XLSI), 65–85 (IDPL…MVLI), 96–116 (GYLI…GLVT), 123–143 (IYIF…FWFT), 161–181 (GDFG…SFEF), 206–226 (AALL…HVWL), 234–254 (TPIS…FLVA), 256–276 (LLPL…IGII), 303–323 (LXYM…FHLI), 330–350 (ALLF…VGYS), 372–392 (TSFL…CFWS), 401–421 (WLYS…TAFY), 524–544 (LFPL…GIPF), and 583–603 (IFSV…YKPI).

Belongs to the complex I subunit 5 family. In terms of assembly, NDH is composed of at least 16 different subunits, 5 of which are encoded in the nucleus.

It localises to the plastid. The protein localises to the chloroplast thylakoid membrane. It carries out the reaction a plastoquinone + NADH + (n+1) H(+)(in) = a plastoquinol + NAD(+) + n H(+)(out). The catalysed reaction is a plastoquinone + NADPH + (n+1) H(+)(in) = a plastoquinol + NADP(+) + n H(+)(out). NDH shuttles electrons from NAD(P)H:plastoquinone, via FMN and iron-sulfur (Fe-S) centers, to quinones in the photosynthetic chain and possibly in a chloroplast respiratory chain. The immediate electron acceptor for the enzyme in this species is believed to be plastoquinone. Couples the redox reaction to proton translocation, and thus conserves the redox energy in a proton gradient. In Sesamum indicum (Oriental sesame), this protein is NAD(P)H-quinone oxidoreductase subunit 5, chloroplastic (ndhF).